The sequence spans 331 residues: Anthranilate phosphoribosyltransferase (331 aa).

5-phospho-alpha-D-ribose 1-diphosphate is bound by residues Gly-79, 82-83, Thr-87, 89-92, 107-115, and Ser-119; these read GD, NVST, and KHGNYGVSS. Gly-79 contacts anthranilate. Residue Ser-91 participates in Mg(2+) binding. Asn-110 is an anthranilate binding site. Arg-165 lines the anthranilate pocket. Asp-223 and Glu-224 together coordinate Mg(2+).

This sequence belongs to the anthranilate phosphoribosyltransferase family. As to quaternary structure, homodimer. The cofactor is Mg(2+).

The enzyme catalyses N-(5-phospho-beta-D-ribosyl)anthranilate + diphosphate = 5-phospho-alpha-D-ribose 1-diphosphate + anthranilate. It participates in amino-acid biosynthesis; L-tryptophan biosynthesis; L-tryptophan from chorismate: step 2/5. Its function is as follows. Catalyzes the transfer of the phosphoribosyl group of 5-phosphorylribose-1-pyrophosphate (PRPP) to anthranilate to yield N-(5'-phosphoribosyl)-anthranilate (PRA). This Christiangramia forsetii (strain DSM 17595 / CGMCC 1.15422 / KT0803) (Gramella forsetii) protein is Anthranilate phosphoribosyltransferase.